A 125-amino-acid polypeptide reads, in one-letter code: Fumarate reductase subunit D (125 aa).

Helical transmembrane passes span 29 to 49 (VTALVAPVLLLLFGLAFPLGW), 64 to 84 (NPITKLVVLVLVVLALFHAAH), and 102 to 122 (VIALWCYGMAVLGSATAGWML).

It belongs to the FrdD family. As to quaternary structure, part of an enzyme complex containing four subunits: a flavoprotein (FrdA), an iron-sulfur protein (FrdB), and two hydrophobic anchor proteins (FrdC and FrdD).

Its subcellular location is the cell membrane. Functionally, anchors the catalytic components of the fumarate reductase complex to the cell membrane, binds quinones. The protein is Fumarate reductase subunit D of Mycobacterium bovis (strain BCG / Tokyo 172 / ATCC 35737 / TMC 1019).